A 136-amino-acid polypeptide reads, in one-letter code: Large ribosomal subunit protein eL27B (136 aa).

This sequence belongs to the eukaryotic ribosomal protein eL27 family. In terms of assembly, component of the large ribosomal subunit (LSU). Mature yeast ribosomes consist of a small (40S) and a large (60S) subunit. The 40S small subunit contains 1 molecule of ribosomal RNA (18S rRNA) and at least 33 different proteins. The large 60S subunit contains 3 rRNA molecules (25S, 5.8S and 5S rRNA) and at least 46 different proteins.

The protein resides in the cytoplasm. Component of the ribosome, a large ribonucleoprotein complex responsible for the synthesis of proteins in the cell. The small ribosomal subunit (SSU) binds messenger RNAs (mRNAs) and translates the encoded message by selecting cognate aminoacyl-transfer RNA (tRNA) molecules. The large subunit (LSU) contains the ribosomal catalytic site termed the peptidyl transferase center (PTC), which catalyzes the formation of peptide bonds, thereby polymerizing the amino acids delivered by tRNAs into a polypeptide chain. The nascent polypeptides leave the ribosome through a tunnel in the LSU and interact with protein factors that function in enzymatic processing, targeting, and the membrane insertion of nascent chains at the exit of the ribosomal tunnel. The polypeptide is Large ribosomal subunit protein eL27B (rpl2702) (Schizosaccharomyces pombe (strain 972 / ATCC 24843) (Fission yeast)).